The primary structure comprises 54 residues: Small ribosomal subunit protein uS14 (54 aa).

Zn(2+) is bound by residues Cys-19, Cys-22, Cys-37, and Cys-40.

Belongs to the universal ribosomal protein uS14 family. Zinc-binding uS14 subfamily. In terms of assembly, part of the 30S ribosomal subunit. Zn(2+) serves as cofactor.

Binds 16S rRNA, required for the assembly of 30S particles. This is Small ribosomal subunit protein uS14 from Sulfurisphaera tokodaii (strain DSM 16993 / JCM 10545 / NBRC 100140 / 7) (Sulfolobus tokodaii).